Reading from the N-terminus, the 589-residue chain is Protein kinase G11A (589 aa).

The interval 1 to 167 is disordered; that stretch reads MASKAMPRAP…SACSSISSVT (167 aa). Polar residues-rich tracts occupy residues 15-36 and 63-76; these read NLQSLKLCSQNDSSLETTSPSK and TQHQNESIDLTGSN. Residues 91-100 are compositionally biased toward basic and acidic residues; it reads RLADEEKGVV. A compositionally biased stretch (low complexity) spans 142–165; the sequence is SSSRCRPSTSSDVSDESACSSISS. The Protein kinase domain maps to 195-533; that stretch reads FKLLKKLGCG…ATEIKQHPFF (339 aa). ATP is bound by residues 201–209 and lysine 224; that span reads LGCGDIGSV. The active-site Proton acceptor is the aspartate 320. Residues 551-589 form a disordered region; sequence RPVEIERPPKQPVSTSEPAAAPSDAAQKSSDSYLEFDFF.

It belongs to the protein kinase superfamily. Ser/Thr protein kinase family.

It catalyses the reaction L-seryl-[protein] + ATP = O-phospho-L-seryl-[protein] + ADP + H(+). The catalysed reaction is L-threonyl-[protein] + ATP = O-phospho-L-threonyl-[protein] + ADP + H(+). May play a role in the regulation of metabolism and signal transduction processes. This Oryza sativa subsp. japonica (Rice) protein is Protein kinase G11A.